The chain runs to 345 residues: MFSALRHRTAALALGVCFILPVHASSPKPGDFANTQARHIATFFPGRMTGTPAEMLSADYIRQQFQQMGYRSDIRTFNSRYIYTARDNRKSWHNVTGSTVIAAHEGKAPQQIIIMAHLDTYAPLSDADADANLGGLTLQGMDDNAAGLGVMLELAERLKNTPTEYGIRFVATSGEEEGKLGAENLLKRMSDTEKKNTLLVINLDNLIVGDKLYFNSGVKTPEAVRKLTRDRALAIARSHGIAATTNPGLNKNYPKGTGCCNDAEIFDKAGIAVLSVEATNWNLGNKDGYQQRAKTPAFPAGNSWHDVRLDNHQHIDKALPGRIERRCRDVMRIMLPLVKELAKAS.

Residues 1-24 form the signal peptide; the sequence is MFSALRHRTAALALGVCFILPVHA. Positions 117, 143, 176, and 204 each coordinate Zn(2+).

The protein belongs to the peptidase M28 family. M28C subfamily.

Its function is as follows. This protein, presumably an aminopeptidase, mediates the conversion of E.coli alkaline phosphatase isozyme 1, to isozymes 2 and 3 by removing, one by one, the two N-terminal arginine residues. The chain is Alkaline phosphatase isozyme conversion protein (iap) from Escherichia coli (strain K12).